The sequence spans 690 residues: Probable xyloglucan glycosyltransferase 1 (690 aa).

2 helical membrane-spanning segments follow: residues 120-140 (AFLL…AQGW) and 166-186 (LEYL…LFLI). Aspartate 272 is an active-site residue. 2 residues coordinate substrate: aspartate 331 and aspartate 333. Residue aspartate 425 is part of the active site. 2 helical membrane passes run 503 to 523 (LILP…TMFV) and 528 to 548 (LPAW…ILPA). A disordered region spans residues 607–637 (QPKQQRVGSAPNLDSLAKESHPKKDSKKKKH). 2 consecutive transmembrane segments (helical) span residues 640–659 (IYQK…ARSL) and 665–685 (IHFY…LDLI).

This sequence belongs to the glycosyltransferase 2 family. Plant cellulose synthase-like C subfamily.

The protein resides in the golgi apparatus membrane. Functionally, probable beta-1,4-glucan synthase rather involved in the synthesis of the xyloglucan backbone than cellulose. Seems to work simultaneously with xyloglucan 6-xylosyltransferase. Xyloglucan is a noncellulosic polysaccharides of plant cell wall and consists of a glucan backbone substituted by xylose, galactose and fucose. The sequence is that of Probable xyloglucan glycosyltransferase 1 (CSLC1) from Oryza sativa subsp. japonica (Rice).